A 468-amino-acid chain; its full sequence is MTKQDTTDKLWGGRFTEATDAFVERFTASVDFDRRMYHHDIRGSIAHATMLAKVGVLTEEERDQIINGLREIEAEIEAGAFEWSVKLEDVHMNIEARLTQKIGITGKKLHTGRSRNDQVATDIRLYLRDEVDVIAAELLRLIAALADLAEREADAIMPGFTHLQTAQPVTFGHHMLAWAEMLKRDFSRLADCRERFNVSPLGAAALAGTTYSIDRQYTSELLGFNGPAENSLDAVSDRDFAIEFCSFASLLMMHLSRFSEELVLWTSAQFNFINLPDRFCTGSSIMPQKKNPDVPELIRGKSGRVSGHLISLLMLMKSQPLAYNKDNQEDKEPLFDAIDTVKGCLKAYGDMMPAVSVNRDAMAESARRGFSTATDLADYLVRKGLPFRDAHEVVGKAVALGVSSGRDLSEMSLEELREFSADIEVDVFEVLTLEGSVNARNHIGGTAPEQVRAAVVRTREWLKRNTEM.

It belongs to the lyase 1 family. Argininosuccinate lyase subfamily.

The protein localises to the cytoplasm. It catalyses the reaction 2-(N(omega)-L-arginino)succinate = fumarate + L-arginine. Its pathway is amino-acid biosynthesis; L-arginine biosynthesis; L-arginine from L-ornithine and carbamoyl phosphate: step 3/3. This Hahella chejuensis (strain KCTC 2396) protein is Argininosuccinate lyase.